The primary structure comprises 307 residues: Mitochondrial brown fat uncoupling protein 1 (307 aa).

At 1–10 (MVSQTTSEVQ) the chain is on the mitochondrial intermembrane side. A helical transmembrane segment spans residues 11 to 32 (PTMGVKIFSAGVAACLADIITF). 3 Solcar repeats span residues 11-102 (PTMG…VQEY), 111-201 (PTLV…MKGA), and 210-295 (DDVP…LKKE). Residues 33–73 (PLDTAKVRLQIQGEGQTSSTIRYKGVLGTITTLAKTEGLPK) lie on the Mitochondrial matrix side of the membrane. Fatty acid 16:0 is bound at residue Lys-56. Residues 74 to 96 (LYSGLPAGIQRQISFASLRIGLY) form a helical membrane-spanning segment. At 97 to 116 (DTVQEYFSSGKETPPTLVNR) the chain is on the mitochondrial intermembrane side. A helical membrane pass occupies residues 117–133 (ISAGLMTGGVAVFIGQP). Topologically, residues 134 to 178 (TEVVKVRLQAQSHLHGIKPRYTGTYNAYRIIATTESLSTLWKGTT) are mitochondrial matrix. Residues 179-195 (PNLLRNVIINCTELVTY) form a helical membrane-spanning segment. Residues 196–212 (DLMKGALVNNQILADDV) lie on the Mitochondrial intermembrane side of the membrane. The chain crosses the membrane as a helical span at residues 213-232 (PCHLLSALVAGFCTTFLASP). Residues 233-266 (ADVVKTRFINSLPGQYPSVPSCAMTMFTKEGPTA) lie on the Mitochondrial matrix side of the membrane. The residue at position 254 (Cys-254) is a Cysteine sulfenic acid (-SOH). A helical membrane pass occupies residues 267 to 289 (FFKGFVPSFLRLASWNVIMFVCF). Residue Lys-269 participates in fatty acid 16:0 binding. Topologically, residues 290-307 (EQLKKELMKSRQTVDCTT) are mitochondrial intermembrane.

This sequence belongs to the mitochondrial carrier (TC 2.A.29) family. In terms of assembly, most probably functions as a monomer. Binds one purine nucleotide per monomer. However, has also been suggested to function as a homodimer or a homotetramer. Tightly associates with cardiolipin in the mitochondrion inner membrane; may stabilize and regulate its activity. May undergo sulfenylation upon cold exposure. May increase the sensitivity of UCP1 thermogenic function to the activation by noradrenaline probably through structural effects. Post-translationally, may undergo ubiquitin-mediated proteasomal degradation. Brown adipose tissue.

Its subcellular location is the mitochondrion inner membrane. The catalysed reaction is H(+)(in) = H(+)(out). Has no constitutive proton transporter activity and has to be activated by long-chain fatty acids/LCFAs. Inhibited by purine nucleotides. Both purine nucleotides and LCFAs bind the cytosolic side of the transporter and directly compete to activate or inhibit it. Activated by noradrenaline and reactive oxygen species. Despite lacking canonical translational encoding for selenocysteine, a small pool of the protein has been observed to selectively incorporate selenocysteine at 'Cys-254'. Selenocysteine-modified protein is highly sensitive to redox modification and may constitute a pool of protein highly sensitive to activation by elevated levels of reactive oxygen species (ROS). In terms of biological role, mitochondrial protein responsible for thermogenic respiration, a specialized capacity of brown adipose tissue and beige fat that participates in non-shivering adaptive thermogenesis to temperature and diet variations and more generally to the regulation of energy balance. Functions as a long-chain fatty acid/LCFA and proton symporter, simultaneously transporting one LCFA and one proton through the inner mitochondrial membrane. However, LCFAs remaining associated with the transporter via their hydrophobic tails, it results in an apparent transport of protons activated by LCFAs. Thereby, dissipates the mitochondrial proton gradient and converts the energy of substrate oxydation into heat instead of ATP. Regulates the production of reactive oxygen species/ROS by mitochondria. This is Mitochondrial brown fat uncoupling protein 1 from Phodopus sungorus (Striped hairy-footed hamster).